We begin with the raw amino-acid sequence, 445 residues long: Phosphoglucosamine mutase (445 aa).

Catalysis depends on serine 102, which acts as the Phosphoserine intermediate. Mg(2+) is bound by residues serine 102, aspartate 241, aspartate 243, and aspartate 245. At serine 102 the chain carries Phosphoserine.

This sequence belongs to the phosphohexose mutase family. Mg(2+) is required as a cofactor. Post-translationally, activated by phosphorylation.

It carries out the reaction alpha-D-glucosamine 1-phosphate = D-glucosamine 6-phosphate. In terms of biological role, catalyzes the conversion of glucosamine-6-phosphate to glucosamine-1-phosphate. The protein is Phosphoglucosamine mutase of Shigella dysenteriae serotype 1 (strain Sd197).